A 357-amino-acid polypeptide reads, in one-letter code: Protein RecA (357 aa).

73–80 contributes to the ATP binding site; that stretch reads GPESSGKT.

The protein belongs to the RecA family.

It is found in the cytoplasm. Functionally, can catalyze the hydrolysis of ATP in the presence of single-stranded DNA, the ATP-dependent uptake of single-stranded DNA by duplex DNA, and the ATP-dependent hybridization of homologous single-stranded DNAs. It interacts with LexA causing its activation and leading to its autocatalytic cleavage. The sequence is that of Protein RecA from Nitratidesulfovibrio vulgaris (strain DSM 19637 / Miyazaki F) (Desulfovibrio vulgaris).